The sequence spans 84 residues: MANREGGRRNSGKLRRAKRKVCAFCMDKSEFIDYKDINKLRKYVTERGKILPRRISGNCAKHQRELTRAIKRARNIALLPFTTE.

This sequence belongs to the bacterial ribosomal protein bS18 family. In terms of assembly, part of the 30S ribosomal subunit. Forms a tight heterodimer with protein bS6.

Binds as a heterodimer with protein bS6 to the central domain of the 16S rRNA, where it helps stabilize the platform of the 30S subunit. The polypeptide is Small ribosomal subunit protein bS18 (Clostridium kluyveri (strain NBRC 12016)).